Here is a 387-residue protein sequence, read N- to C-terminus: 3-ketoacyl-CoA thiolase (387 aa).

The Acyl-thioester intermediate role is filled by Cys-91. Residues His-343 and Cys-373 each act as proton acceptor in the active site.

This sequence belongs to the thiolase-like superfamily. Thiolase family. As to quaternary structure, heterotetramer of two alpha chains (FadB) and two beta chains (FadA).

The protein resides in the cytoplasm. It carries out the reaction an acyl-CoA + acetyl-CoA = a 3-oxoacyl-CoA + CoA. It functions in the pathway lipid metabolism; fatty acid beta-oxidation. In terms of biological role, catalyzes the final step of fatty acid oxidation in which acetyl-CoA is released and the CoA ester of a fatty acid two carbons shorter is formed. This Aeromonas hydrophila subsp. hydrophila (strain ATCC 7966 / DSM 30187 / BCRC 13018 / CCUG 14551 / JCM 1027 / KCTC 2358 / NCIMB 9240 / NCTC 8049) protein is 3-ketoacyl-CoA thiolase.